The following is a 371-amino-acid chain: Alanine dehydrogenase (371 aa).

2 residues coordinate substrate: R15 and K75. The active-site Proton donor/acceptor is the H96. Residues S134, D198, R203, S220, 239–240 (VL), 267–270 (VAID), K279, and 298–301 (VANM) contribute to the NAD(+) site. D270 functions as the Proton donor/acceptor in the catalytic mechanism.

Belongs to the AlaDH/PNT family. Mg(2+) serves as cofactor.

It carries out the reaction L-alanine + NAD(+) + H2O = pyruvate + NH4(+) + NADH + H(+). Its pathway is amino-acid degradation; L-alanine degradation via dehydrogenase pathway; NH(3) and pyruvate from L-alanine: step 1/1. Functionally, catalyzes the reversible reductive amination of pyruvate to L-alanine. The chain is Alanine dehydrogenase from Halomonas elongata (strain ATCC 33173 / DSM 2581 / NBRC 15536 / NCIMB 2198 / 1H9).